A 491-amino-acid polypeptide reads, in one-letter code: Angiopoietin-related protein 1 (491 aa).

An N-terminal signal peptide occupies residues 1–23; that stretch reads MKAFIWTLSVLFFLLMGIGHGRG. The stretch at 80–168 forms a coiled coil; that stretch reads ITRMDLENLK…LNVTTEMLKM (89 aa). Residues Asn160 and Asn188 are each glycosylated (N-linked (GlcNAc...) asparagine). In terms of domain architecture, Fibrinogen C-terminal spans 271 to 491; that stretch reads FINEGPYKDC…AVQMLIKPID (221 aa). 2 disulfides stabilise this stretch: Cys280–Cys309 and Cys432–Cys445.

It is found in the secreted. The protein is Angiopoietin-related protein 1 (ANGPTL1) of Bos taurus (Bovine).